We begin with the raw amino-acid sequence, 96 residues long: Glycine-rich protein DC7.1 (96 aa).

Positions 1–25 (MGSKIFLLLGLSIAFALLISSEVAA) are cleaved as a signal peptide. A disordered region spans residues 29–66 (SETTTEGASLDGGHHGGGGGGHYSGGGGHGGSHHGGGG). 2 consecutive repeat copies span residues 42 to 50 (HHGGGGGGH) and 61 to 67 (HHGGGGH). The segment at 42–67 (HHGGGGGGHYSGGGGHGGSHHGGGGH) is 2 approximate repeats of H-H-G(4,6)-H. Residues 43–66 (HGGGGGGHYSGGGGHGGSHHGGGG) are compositionally biased toward gly residues.

This sequence belongs to the GRP family.

Its function is as follows. May be connected with the initiation of embryogenesis or with the metabolic changes produced by the removal of auxins. This Daucus carota (Wild carrot) protein is Glycine-rich protein DC7.1.